Here is a 147-residue protein sequence, read N- to C-terminus: MKIVLQRVSQASVTIEGSIHGQIEQGLLLLVGVGPDDSQEDLDYAVRKIVNMRIFSDEAGKMNKSVQDVAGKILSISQFTLFADTKKGNRPAFTGAAAPALASQLYDAFNQALSAFVPVEVGVFGADMAVSLVNDGPVTIVLDTKNK.

The Gly-cisPro motif, important for rejection of L-amino acids motif lies at 136–137; it reads GP.

The protein belongs to the DTD family. As to quaternary structure, homodimer.

It is found in the cytoplasm. The catalysed reaction is glycyl-tRNA(Ala) + H2O = tRNA(Ala) + glycine + H(+). It catalyses the reaction a D-aminoacyl-tRNA + H2O = a tRNA + a D-alpha-amino acid + H(+). In terms of biological role, an aminoacyl-tRNA editing enzyme that deacylates mischarged D-aminoacyl-tRNAs. Also deacylates mischarged glycyl-tRNA(Ala), protecting cells against glycine mischarging by AlaRS. Acts via tRNA-based rather than protein-based catalysis; rejects L-amino acids rather than detecting D-amino acids in the active site. By recycling D-aminoacyl-tRNA to D-amino acids and free tRNA molecules, this enzyme counteracts the toxicity associated with the formation of D-aminoacyl-tRNA entities in vivo and helps enforce protein L-homochirality. The sequence is that of D-aminoacyl-tRNA deacylase from Streptococcus suis (strain 98HAH33).